Here is a 396-residue protein sequence, read N- to C-terminus: Metacaspase-1 (396 aa).

Gly residues predominate over residues 1–20 (MSGYPGQGYQGQGYGQGYGQ). The interval 1–86 (MSGYPGQGYQ…PQGMQQFGHG (86 aa)) is disordered. The segment covering 47–62 (HYQYGPPQGGYQYPPQ) has biased composition (low complexity). Over residues 72-81 (QAHQPPQGMQ) the composition is skewed to polar residues. Active-site residues include His186 and Cys242.

This sequence belongs to the peptidase C14B family.

Involved in cell death (apoptosis). This chain is Metacaspase-1 (MCA1), found in Pyricularia oryzae (strain 70-15 / ATCC MYA-4617 / FGSC 8958) (Rice blast fungus).